Reading from the N-terminus, the 297-residue chain is 4-hydroxy-tetrahydrodipicolinate synthase (297 aa).

Position 50 (threonine 50) interacts with pyruvate. Tyrosine 138 (proton donor/acceptor) is an active-site residue. Lysine 166 serves as the catalytic Schiff-base intermediate with substrate. A pyruvate-binding site is contributed by isoleucine 208.

It belongs to the DapA family. In terms of assembly, homotetramer; dimer of dimers.

Its subcellular location is the cytoplasm. It catalyses the reaction L-aspartate 4-semialdehyde + pyruvate = (2S,4S)-4-hydroxy-2,3,4,5-tetrahydrodipicolinate + H2O + H(+). It functions in the pathway amino-acid biosynthesis; L-lysine biosynthesis via DAP pathway; (S)-tetrahydrodipicolinate from L-aspartate: step 3/4. In terms of biological role, catalyzes the condensation of (S)-aspartate-beta-semialdehyde [(S)-ASA] and pyruvate to 4-hydroxy-tetrahydrodipicolinate (HTPA). The sequence is that of 4-hydroxy-tetrahydrodipicolinate synthase from Gluconobacter oxydans (strain 621H) (Gluconobacter suboxydans).